Consider the following 349-residue polypeptide: Inhibitor of nuclear factor kappa-B kinase-interacting protein (349 aa).

The segment covering 1 to 11 (MSEVKSRKKSG) has biased composition (basic residues). Residues 1–39 (MSEVKSRKKSGTKGAPAEPGKRNEGGKSPEARGGGGRGW) form a disordered region. A compositionally biased stretch (basic and acidic residues) spans 19-30 (PGKRNEGGKSPE). Residues 45-61 (GVSLLSLGTCLGLAWFV) form a helical membrane-spanning segment. A glycan (N-linked (GlcNAc...) asparagine) is linked at asparagine 145. 2 coiled-coil regions span residues 183–216 (GLVT…IGDL) and 304–347 (IGRL…HISD). A glycan (N-linked (GlcNAc...) asparagine) is linked at asparagine 327.

Post-translationally, N-glycosylated.

Its subcellular location is the endoplasmic reticulum membrane. Functionally, target of p53/TP53 with pro-apoptotic function. This Bos taurus (Bovine) protein is Inhibitor of nuclear factor kappa-B kinase-interacting protein (IKBIP).